We begin with the raw amino-acid sequence, 375 residues long: 23S rRNA (uracil(747)-C(5))-methyltransferase RlmC (375 aa).

Residues C3, C11, C14, and C87 each coordinate [4Fe-4S] cluster. 4 residues coordinate S-adenosyl-L-methionine: Q212, F241, E262, and N307. C334 functions as the Nucleophile in the catalytic mechanism.

The protein belongs to the class I-like SAM-binding methyltransferase superfamily. RNA M5U methyltransferase family. RlmC subfamily.

It carries out the reaction uridine(747) in 23S rRNA + S-adenosyl-L-methionine = 5-methyluridine(747) in 23S rRNA + S-adenosyl-L-homocysteine + H(+). Its function is as follows. Catalyzes the formation of 5-methyl-uridine at position 747 (m5U747) in 23S rRNA. This chain is 23S rRNA (uracil(747)-C(5))-methyltransferase RlmC, found in Shigella boydii serotype 18 (strain CDC 3083-94 / BS512).